Here is a 647-residue protein sequence, read N- to C-terminus: Threonine--tRNA ligase (647 aa).

The region spanning 1–61 is the TGS domain; the sequence is MIKITFPDGA…EEDGSIEIVT (61 aa). The segment at 240–538 is catalytic; it reads DHRKLGKELD…LIETYKGAFP (299 aa). Residues C334, H385, and H515 each coordinate Zn(2+).

Belongs to the class-II aminoacyl-tRNA synthetase family. In terms of assembly, homodimer. Zn(2+) serves as cofactor.

Its subcellular location is the cytoplasm. The catalysed reaction is tRNA(Thr) + L-threonine + ATP = L-threonyl-tRNA(Thr) + AMP + diphosphate + H(+). In terms of biological role, catalyzes the attachment of threonine to tRNA(Thr) in a two-step reaction: L-threonine is first activated by ATP to form Thr-AMP and then transferred to the acceptor end of tRNA(Thr). Also edits incorrectly charged L-seryl-tRNA(Thr). The protein is Threonine--tRNA ligase of Streptococcus agalactiae serotype III (strain NEM316).